The primary structure comprises 832 residues: Translation initiation factor IF-2 (832 aa).

Residues 1–244 (MSDTDGKKTL…KAMGGSQERE (244 aa)) are disordered. Over residues 18 to 27 (TGQVKQSFSH) the composition is skewed to polar residues. Residues 81–141 (KANESEEAER…EARKKAEADA (61 aa)) show a composition bias toward basic and acidic residues. Low complexity predominate over residues 142–171 (SSKPAAARSKADDPATMDPAAAQAAEARGA). Basic and acidic residues-rich tracts occupy residues 178–201 (PRKE…DDRR) and 227–244 (RKQE…QERE). The 169-residue stretch at 329 to 497 (PRPPVITVMG…SIALQAEILE (169 aa)) folds into the tr-type G domain. The interval 338-345 (GHVDHGKT) is G1. Position 338–345 (338–345 (GHVDHGKT)) interacts with GTP. A G2 region spans residues 363–367 (GITQH). Residues 385–388 (DTPG) form a G3 region. Residues 385–389 (DTPGH) and 439–442 (NKID) each bind GTP. The G4 stretch occupies residues 439–442 (NKID). A G5 region spans residues 475 to 477 (SAI).

Belongs to the TRAFAC class translation factor GTPase superfamily. Classic translation factor GTPase family. IF-2 subfamily.

The protein localises to the cytoplasm. One of the essential components for the initiation of protein synthesis. Protects formylmethionyl-tRNA from spontaneous hydrolysis and promotes its binding to the 30S ribosomal subunits. Also involved in the hydrolysis of GTP during the formation of the 70S ribosomal complex. The sequence is that of Translation initiation factor IF-2 from Dinoroseobacter shibae (strain DSM 16493 / NCIMB 14021 / DFL 12).